The sequence spans 286 residues: Cbb3-type cytochrome c oxidase subunit CcoP (286 aa).

2 helical membrane passes run 11 to 31 and 62 to 82; these read FGLI…SSLI and VGWI…FFFG. Cytochrome c domains lie at 116 to 195 and 205 to 286; these read ELVD…MAEL and QLID…LSNR. Heme c is bound by residues C129, C132, H133, M174, C219, C222, H223, and M264.

Belongs to the CcoP / FixP family. As to quaternary structure, component of the cbb3-type cytochrome c oxidase at least composed of CcoN, CcoO, CcoQ and CcoP. Heme c is required as a cofactor.

It is found in the cell inner membrane. It functions in the pathway energy metabolism; oxidative phosphorylation. C-type cytochrome. Part of the cbb3-type cytochrome c oxidase complex. CcoP subunit is required for transferring electrons from donor cytochrome c via its heme groups to CcoO subunit. From there, electrons are shuttled to the catalytic binuclear center of CcoN subunit where oxygen reduction takes place. The complex also functions as a proton pump. This chain is Cbb3-type cytochrome c oxidase subunit CcoP, found in Helicobacter pylori (strain ATCC 700392 / 26695) (Campylobacter pylori).